Reading from the N-terminus, the 262-residue chain is Acyl-[acyl-carrier-protein]--UDP-N-acetylglucosamine O-acyltransferase (262 aa).

This sequence belongs to the transferase hexapeptide repeat family. LpxA subfamily. As to quaternary structure, homotrimer.

The protein localises to the cytoplasm. It catalyses the reaction a (3R)-hydroxyacyl-[ACP] + UDP-N-acetyl-alpha-D-glucosamine = a UDP-3-O-[(3R)-3-hydroxyacyl]-N-acetyl-alpha-D-glucosamine + holo-[ACP]. It functions in the pathway glycolipid biosynthesis; lipid IV(A) biosynthesis; lipid IV(A) from (3R)-3-hydroxytetradecanoyl-[acyl-carrier-protein] and UDP-N-acetyl-alpha-D-glucosamine: step 1/6. Its function is as follows. Involved in the biosynthesis of lipid A, a phosphorylated glycolipid that anchors the lipopolysaccharide to the outer membrane of the cell. The sequence is that of Acyl-[acyl-carrier-protein]--UDP-N-acetylglucosamine O-acyltransferase from Blochmanniella floridana.